The chain runs to 659 residues: QWRF motif-containing protein 2 (659 aa).

5 disordered regions span residues 1-125, 157-221, 291-317, 340-359, and 371-429; these read MVAA…SVTV, SKKK…LDCG, DTDS…ISKS, RLQD…TSSI, and SDAV…NAYN. The segment covering 42–72 has biased composition (low complexity); it reads SPSPSHSVSSTTTTTTTTTTTTSSSSSSSSS. A compositionally biased stretch (polar residues) spans 90-102; that stretch reads RSTTNSASNSIKT. The segment covering 172-190 has biased composition (basic and acidic residues); sequence STPERRRSTPVRDQRENSK. Polar residues-rich tracts occupy residues 206–216 and 291–303; these read SESVVPNSLSR and DTDS…TNGV. Composition is skewed to low complexity over residues 345–359 and 401–418; these read GSPL…TSSI and ATTT…SRAR. A QWRF motif motif is present at residues 468–471; that stretch reads QWRF.

The protein belongs to the QWRF family.

The sequence is that of QWRF motif-containing protein 2 (QWRF2) from Arabidopsis thaliana (Mouse-ear cress).